Consider the following 352-residue polypeptide: Serine protease 55 (352 aa).

The signal sequence occupies residues M1–L18. The Peptidase S1 domain occupies I68–Q300. A disulfide bridge connects residues C93 and C109. Residues H108 and D156 each act as charge relay system in the active site. Disulfide bonds link C189-C256, C222-C235, and C246-C276. N-linked (GlcNAc...) asparagine glycosylation occurs at N240. S250 serves as the catalytic Charge relay system. The interval A308–P330 is disordered. Over residues P319–P330 the composition is skewed to low complexity. A lipid anchor (GPI-anchor amidated serine) is attached at S325. A propeptide spans G326 to Y352 (removed in mature form).

This sequence belongs to the peptidase S1 family. As to expression, only detected in testis. Expressed in spermatogonia, spermatocytes, spermatids, Leydig and Sertoli cells. Expressed in prostate cancer and ovarian cancer (at protein level).

It is found in the cell membrane. It localises to the cytoplasm. The protein resides in the cytosol. Functionally, probable serine protease, which plays a crucial role in the fertility of male mice including sperm migration and sperm-egg interaction. The protein is Serine protease 55 (PRSS55) of Homo sapiens (Human).